Here is a 203-residue protein sequence, read N- to C-terminus: dITP/XTP pyrophosphatase (203 aa).

Residue 8–13 (TANKGK) coordinates substrate. Mg(2+) is bound by residues glutamate 41 and aspartate 70. Aspartate 70 functions as the Proton acceptor in the catalytic mechanism. Substrate contacts are provided by residues serine 71, 153 to 156 (FGYD), lysine 176, and 181 to 182 (HR).

It belongs to the HAM1 NTPase family. As to quaternary structure, homodimer. It depends on Mg(2+) as a cofactor.

The enzyme catalyses XTP + H2O = XMP + diphosphate + H(+). It carries out the reaction dITP + H2O = dIMP + diphosphate + H(+). It catalyses the reaction ITP + H2O = IMP + diphosphate + H(+). Functionally, pyrophosphatase that catalyzes the hydrolysis of nucleoside triphosphates to their monophosphate derivatives, with a high preference for the non-canonical purine nucleotides XTP (xanthosine triphosphate), dITP (deoxyinosine triphosphate) and ITP. Seems to function as a house-cleaning enzyme that removes non-canonical purine nucleotides from the nucleotide pool, thus preventing their incorporation into DNA/RNA and avoiding chromosomal lesions. The polypeptide is dITP/XTP pyrophosphatase (Listeria monocytogenes serovar 1/2a (strain ATCC BAA-679 / EGD-e)).